Here is a 158-residue protein sequence, read N- to C-terminus: Male-specific protein scotti (158 aa).

Positions N24–A43 are disordered. The span at G30 to D42 shows a compositional bias: acidic residues.

The protein belongs to the male-specific scotti family.

In terms of biological role, post-meiotically transcribed gene that has a role in late spermiogenesis; required for actin cone progression during spermatid individualization. The chain is Male-specific protein scotti from Drosophila virilis (Fruit fly).